Reading from the N-terminus, the 753-residue chain is Nigerose phosphorylase (753 aa).

A substrate-binding site is contributed by 348–349 (WD). E490 (proton donor) is an active-site residue. 604–605 (KQ) lines the substrate pocket.

This sequence belongs to the glycosyl hydrolase 65 family. Homodimer.

The protein localises to the cytoplasm. It catalyses the reaction nigerose + phosphate = beta-D-glucose 1-phosphate + D-glucose. Its activity is regulated as follows. Does not require divalent metal ions. Its function is as follows. Catalyzes the reversible phosphorolysis of nigerose. Also shows a weak activity on kojibiose. The sequence is that of Nigerose phosphorylase from Lachnoclostridium phytofermentans (strain ATCC 700394 / DSM 18823 / ISDg) (Clostridium phytofermentans).